Here is a 422-residue protein sequence, read N- to C-terminus: Regulator of sigma-W protease RasP (422 aa).

A run of 4 helical transmembrane segments spans residues 6 to 26, 175 to 195, 346 to 366, and 394 to 414; these read VIAF…GHLL, IAAG…MLGL, IVNL…VNLL, and EAFV…VVTW. Zn(2+) is bound at residue His-20. Glu-21 is a catalytic residue. His-24 lines the Zn(2+) pocket. The region spanning 186 to 271 is the PDZ domain; the sequence is AYVILVMLGL…TLHISVTPEA (86 aa).

The protein belongs to the peptidase M50B family. It depends on Zn(2+) as a cofactor.

It localises to the cell membrane. Functionally, is responsible for site-2 cleavage of the RsiW anti-sigma factor. This results, after a third proteolytic step catalyzed by the ClpXP protease, in the release of SigW and the transcription activation of the genes under the control of the sigma-W factor. Can also cleave liberated signal peptides of PenP and Mpr, probably within in the cell membrane. The protein is Regulator of sigma-W protease RasP of Bacillus subtilis (strain 168).